Consider the following 232-residue polypeptide: Ureidoacrylate amidohydrolase RutB (232 aa).

The active-site Proton acceptor is D26. K135 is an active-site residue. The active-site Nucleophile is the C168.

It belongs to the isochorismatase family. RutB subfamily.

It catalyses the reaction (Z)-3-ureidoacrylate + H2O + H(+) = (Z)-3-aminoacrylate + NH4(+) + CO2. The enzyme catalyses (Z)-3-ureidoacrylate + H2O = (Z)-3-aminoacrylate + carbamate + H(+). The catalysed reaction is (Z)-2-methylureidoacrylate + H2O + H(+) = (Z)-2-methylaminoacrylate + NH4(+) + CO2. Its function is as follows. Hydrolyzes ureidoacrylate to form aminoacrylate and carbamate. The carbamate hydrolyzes spontaneously, thereby releasing one of the nitrogen atoms of the pyrimidine ring as ammonia and one of its carbon atoms as CO2. In Cronobacter turicensis (strain DSM 18703 / CCUG 55852 / LMG 23827 / z3032), this protein is Ureidoacrylate amidohydrolase RutB.